Consider the following 347-residue polypeptide: Transcription elongation factor A protein 3 (347 aa).

Residues 5-82 (EELLRIAKKL…KNWKRLLDSP (78 aa)) form the TFIIS N-terminal domain. The segment covering 83 to 100 (RTTKGEREEREKAKKEKG) has biased composition (basic and acidic residues). Positions 83–168 (RTTKGEREER…TTPSSPSTPT (86 aa)) are disordered. S113 carries the phosphoserine modification. Residues 119–131 (GGGEPKTRRDSVD) show a composition bias toward basic and acidic residues. 2 stretches are compositionally biased toward low complexity: residues 132–142 (SRSSTTSSPKR) and 157–168 (TPTTPSSPSTPT). Phosphoserine is present on S139. Residues 186–302 (VRDKCVEMLS…EHQMAKTGGT (117 aa)) enclose the TFIIS central domain. Residues 305-345 (DLLRCSKCKKKNCTYNQVQTRSADEPMTTFVLCNECGNRWK) form a TFIIS-type zinc finger. Zn(2+)-binding residues include C309, C312, C337, and C340.

Belongs to the TFS-II family. In terms of tissue distribution, liver, kidney and heart.

It is found in the nucleus. Its function is as follows. Necessary for efficient RNA polymerase II transcription elongation past template-encoded arresting sites. The arresting sites in DNA have the property of trapping a certain fraction of elongating RNA polymerases that pass through, resulting in locked ternary complexes. Cleavage of the nascent transcript by S-II allows the resumption of elongation from the new 3'-terminus. This chain is Transcription elongation factor A protein 3 (Tcea3), found in Mus musculus (Mouse).